Consider the following 982-residue polypeptide: Little elongation complex subunit 2 (982 aa).

Ser17 and Ser326 each carry phosphoserine. The segment covering 410–427 (TTKVSKSPSPASTSTVPN) has biased composition (polar residues). Disordered regions lie at residues 410-450 (TTKV…PDIS) and 473-504 (GMDG…PLIQ). Over residues 479 to 497 (EECKNKDDQGFESCEKVSN) the composition is skewed to basic and acidic residues. A Phosphoserine modification is found at Ser571. Thr573 is subject to Phosphothreonine. 3 disordered regions span residues 595 to 623 (VGSN…NTAC), 672 to 697 (ENSK…KSGW), and 930 to 982 (PKSL…RKIT). Residues 597-610 (SNLSSRPASPNSSS) show a composition bias toward low complexity. Composition is skewed to polar residues over residues 611–623 (GQAS…NTAC) and 672–683 (ENSKQPSVSEQL). Residues 684–697 (SGPSDSSSWPKSGW) show a composition bias toward low complexity. A compositionally biased stretch (polar residues) spans 956-970 (SMETKSSCLPAQQVE).

This sequence belongs to the ICE2 family. Component of the little elongation complex (LEC), at least composed of ELL (ELL, ELL2 or ELL3), ZC3H8, ICE1 and ICE2. Interacts with ICE1 (via C-terminus domain). Interacts with ELL. Expressed at low levels in lung and testis.

The protein resides in the nucleus. Functionally, component of the little elongation complex (LEC), a complex required to regulate small nuclear RNA (snRNA) gene transcription by RNA polymerase II and III. In Homo sapiens (Human), this protein is Little elongation complex subunit 2 (ICE2).